Reading from the N-terminus, the 117-residue chain is NADH-ubiquinone oxidoreductase chain 3 (117 aa).

Helical transmembrane passes span 4–24 (IILI…LASI), 60–80 (ITII…MIII), and 86–106 (IMIW…GLYH).

It belongs to the complex I subunit 3 family.

Its subcellular location is the mitochondrion membrane. It catalyses the reaction a ubiquinone + NADH + 5 H(+)(in) = a ubiquinol + NAD(+) + 4 H(+)(out). Its function is as follows. Core subunit of the mitochondrial membrane respiratory chain NADH dehydrogenase (Complex I) that is believed to belong to the minimal assembly required for catalysis. Complex I functions in the transfer of electrons from NADH to the respiratory chain. The immediate electron acceptor for the enzyme is believed to be ubiquinone. This Drosophila subobscura (Fruit fly) protein is NADH-ubiquinone oxidoreductase chain 3 (mt:ND3).